A 336-amino-acid chain; its full sequence is Torsin-1B (336 aa).

The N-terminal stretch at 1-24 is a signal peptide; that stretch reads MLRAGWLRGAAALALLLAARVVAA. N-linked (GlcNAc...) asparagine glycosylation occurs at N64. Position 109-116 (109-116) interacts with ATP; that stretch reads GWAGTGKN. N165 carries an N-linked (GlcNAc...) asparagine glycan.

Belongs to the ClpA/ClpB family. Torsin subfamily. Homohexamer. Interacts with TOR1A; the interaction may be specific of neural tissues. Interacts with TOR1AIP1; TOR1AIP1 is required for TOR1B location on the nuclear membrane. Interacts (ATP-bound) with TOR1AIP2; important for endoplasmic reticulum integrity. Post-translationally, N-glycosylated. In terms of tissue distribution, widely expressed with low levels in brain.

It localises to the endoplasmic reticulum lumen. The protein resides in the nucleus membrane. It catalyses the reaction ATP + H2O = ADP + phosphate + H(+). Its function is as follows. May serve as a molecular chaperone assisting in the proper folding of secreted and/or membrane proteins. Plays a role in non-neural cells nuclear envelope and endoplasmic reticulum integrity. May have a redundant function with TOR1A in non-neural tissues. This chain is Torsin-1B (TOR1B), found in Homo sapiens (Human).